The sequence spans 185 residues: Thymidine kinase (185 aa).

ATP is bound at residue 17-24; that stretch reads GPMFAGKT. The active-site Proton acceptor is the Glu92. Position 121 (Phe121) interacts with substrate. Positions 146 and 149 each coordinate Zn(2+). Position 166-170 (166-170) interacts with substrate; it reads LILAG. Zn(2+) is bound by residues Cys179 and Cys182.

This sequence belongs to the thymidine kinase family.

The catalysed reaction is thymidine + ATP = dTMP + ADP + H(+). In terms of biological role, phosphorylates thymidine. ASFV replicates in the cytoplasm of infected cells and contains genes encoding a number of enzymes needed for DNA synthesis, including thymidine kinase. Important for growth in swine macrophages in vitro and is a virus virulence factor in swine. In African swine fever virus (isolate Pig/Kenya/KEN-50/1950) (ASFV), this protein is Thymidine kinase.